We begin with the raw amino-acid sequence, 888 residues long: E3 ubiquitin-protein ligase SH3RF1 (888 aa).

The RING-type zinc-finger motif lies at 12-53 (CPVCLERLDASAKVLPCQHTFCKRCLLGIVGSRNELRCPECR). SH3 domains are found at residues 134–193 (PQLP…IIKP) and 196–259 (QPPP…FNSA). The segment at 275 to 321 (DAGECSSAAAQSSTAPKHSDTKKNTKKRHSFTSLTMANKSSQASQNR) is disordered. The interaction with RAC1 stretch occupies residues 292–362 (HSDTKKNTKK…APSQVHISTT (71 aa)). S304 bears the Phosphoserine mark. The span at 305-321 (FTSLTMANKSSQASQNR) shows a compositional bias: polar residues. The interval 440 to 543 (HLRPQTRPSV…STAGGPAQKL (104 aa)) is interaction with AKT2. The SH3 3 domain occupies 445–506 (TRPSVYVAIY…PGNYVAPVTR (62 aa)). Disordered regions lie at residues 516 to 549 (VPMSTAGQTSRGVTMVSPSTAGGPAQKLQGNGVA), 617 to 637 (SPASVGLPHHSLASPQPAPLM), and 693 to 741 (PDSA…ASPT). Residues 520-535 (TAGQTSRGVTMVSPST) are compositionally biased toward polar residues. S532 bears the Phosphoserine mark. A compositionally biased stretch (polar residues) spans 693–704 (PDSASLACGNSS). Basic and acidic residues predominate over residues 707–718 (KPDKDSKKEKKG). S735 carries the post-translational modification Phosphoserine. In terms of domain architecture, SH3 4 spans 829–888 (VVCERHRVVVSYPPQSEAELELKEGDIVFVHKKREDGWFKGTLQRNGKTGLFPGSFVENI).

This sequence belongs to the SH3RF family. In terms of assembly, interacts with HERP1. Interacts with RAC1; in a GTP-dependent manner. Interacts with MAP3K10/MLK2 and MAP3K11/MLK3. Interacts with MAPK8IP; this interaction leads to the PJAC complex (POSH-JIP or SH3RF1/MAPK8IP apoptotic complex) with a 1:1 ratio. Interacts with SIAH1. Probably part of a signaling complex that may contain SH3RF1, MAPK8IP, DLK1, MAP2K4/MKK4, MAP2K7/MKK7, MAPK8/JNK1, MAPK9/JNK2, AKT1 and AKT2. Found in a complex with RAC2, MAP3K7/TAK1, MAP2K7/MKK7, MAPK8IP1/JIP1, MAPK8/JNK1 and MAPK9/JNK2. Found in a complex with RAC1, MAP3K11/MLK3, MAP2K7/MKK7, MAPK8IP1/JIP1 and MAPK8/JNK1. Interacts with SH3RF2. Post-translationally, phosphorylated at Ser-304 by AKT1 and AKT2. When phosphorylated, it has reduced ability to bind Rac. In terms of processing, autoubiquitinated. Ubiquitinated by SH3RF2, leading to proteasome-mediated degradation.

The protein localises to the cytoplasm. The protein resides in the perinuclear region. It localises to the cell projection. It is found in the lamellipodium. Its subcellular location is the golgi apparatus. The protein localises to the trans-Golgi network. It carries out the reaction S-ubiquitinyl-[E2 ubiquitin-conjugating enzyme]-L-cysteine + [acceptor protein]-L-lysine = [E2 ubiquitin-conjugating enzyme]-L-cysteine + N(6)-ubiquitinyl-[acceptor protein]-L-lysine.. It participates in protein modification; protein ubiquitination. Its function is as follows. Has E3 ubiquitin-protein ligase activity. In the absence of an external substrate, it can catalyze self-ubiquitination. Stimulates ubiquitination of potassium channel KCNJ1, enhancing it's dynamin-dependent and clathrin-independent endocytosis. Acts as a scaffold protein that coordinates with MAPK8IP1/JIP1 in organizing different components of the JNK pathway, including RAC1 or RAC2, MAP3K11/MLK3 or MAP3K7/TAK1, MAP2K7/MKK7, MAPK8/JNK1 and/or MAPK9/JNK2 into a functional multiprotein complex to ensure the effective activation of the JNK signaling pathway. Regulates the differentiation of CD4(+) and CD8(+) T-cells and promotes T-helper 1 (Th1) cell differentiation. Regulates the activation of MAPK8/JNK1 and MAPK9/JNK2 in CD4(+) T-cells and the activation of MAPK8/JNK1 in CD8(+) T-cells. Controls proper cortical neuronal migration and the formation of proximal cytoplasmic dilation in the leading process (PCDLP) in migratory neocortical neurons by regulating the proper localization of activated RAC1 and F-actin assembly. This chain is E3 ubiquitin-protein ligase SH3RF1 (SH3RF1), found in Pongo abelii (Sumatran orangutan).